The sequence spans 284 residues: Bifunctional protein FolD (284 aa).

Residues 165 to 167 (GRS) and S190 each bind NADP(+).

The protein belongs to the tetrahydrofolate dehydrogenase/cyclohydrolase family. As to quaternary structure, homodimer.

The enzyme catalyses (6R)-5,10-methylene-5,6,7,8-tetrahydrofolate + NADP(+) = (6R)-5,10-methenyltetrahydrofolate + NADPH. It catalyses the reaction (6R)-5,10-methenyltetrahydrofolate + H2O = (6R)-10-formyltetrahydrofolate + H(+). It participates in one-carbon metabolism; tetrahydrofolate interconversion. Catalyzes the oxidation of 5,10-methylenetetrahydrofolate to 5,10-methenyltetrahydrofolate and then the hydrolysis of 5,10-methenyltetrahydrofolate to 10-formyltetrahydrofolate. The sequence is that of Bifunctional protein FolD from Streptococcus agalactiae serotype Ia (strain ATCC 27591 / A909 / CDC SS700).